A 523-amino-acid chain; its full sequence is Probable lipid II flippase MurJ (523 aa).

A run of 12 helical transmembrane segments spans residues 98-118 (AFYS…IVYV), 146-166 (IMFG…ILNA), 170-190 (FGLP…FTFM), 201-221 (GLAW…AVAL), 246-266 (MLPG…NLYF), 284-304 (LLEL…LPTL), 328-348 (LFLA…IIEV), 360-380 (VQMT…VSCS), 395-415 (VPMV…PVLM), 422-442 (GLMI…MGLL), 461-481 (FVLA…LMAQ), and 489-509 (LALF…AYVL).

This sequence belongs to the MurJ/MviN family.

It is found in the cell inner membrane. It functions in the pathway cell wall biogenesis; peptidoglycan biosynthesis. In terms of biological role, involved in peptidoglycan biosynthesis. Transports lipid-linked peptidoglycan precursors from the inner to the outer leaflet of the cytoplasmic membrane. The sequence is that of Probable lipid II flippase MurJ from Bdellovibrio bacteriovorus (strain ATCC 15356 / DSM 50701 / NCIMB 9529 / HD100).